We begin with the raw amino-acid sequence, 423 residues long: Glutamyl-tRNA reductase (423 aa).

Substrate-binding positions include 51–54 (TCNR), Ser99, 104–106 (EDQ), and Gln110. Cys52 (nucleophile) is an active-site residue. 179–184 (GSGEMG) contacts NADP(+).

The protein belongs to the glutamyl-tRNA reductase family. As to quaternary structure, homodimer.

It catalyses the reaction (S)-4-amino-5-oxopentanoate + tRNA(Glu) + NADP(+) = L-glutamyl-tRNA(Glu) + NADPH + H(+). It functions in the pathway porphyrin-containing compound metabolism; protoporphyrin-IX biosynthesis; 5-aminolevulinate from L-glutamyl-tRNA(Glu): step 1/2. Its function is as follows. Catalyzes the NADPH-dependent reduction of glutamyl-tRNA(Glu) to glutamate 1-semialdehyde (GSA). This Methanoculleus marisnigri (strain ATCC 35101 / DSM 1498 / JR1) protein is Glutamyl-tRNA reductase.